The chain runs to 279 residues: Tryptophan synthase alpha chain (279 aa).

Residues Glu-50 and Asp-61 each act as proton acceptor in the active site.

This sequence belongs to the TrpA family. In terms of assembly, tetramer of two alpha and two beta chains.

The enzyme catalyses (1S,2R)-1-C-(indol-3-yl)glycerol 3-phosphate + L-serine = D-glyceraldehyde 3-phosphate + L-tryptophan + H2O. It participates in amino-acid biosynthesis; L-tryptophan biosynthesis; L-tryptophan from chorismate: step 5/5. Functionally, the alpha subunit is responsible for the aldol cleavage of indoleglycerol phosphate to indole and glyceraldehyde 3-phosphate. This Sinorhizobium fredii (strain NBRC 101917 / NGR234) protein is Tryptophan synthase alpha chain.